Here is a 502-residue protein sequence, read N- to C-terminus: 2-isopropylmalate synthase (502 aa).

Residues D1, H189, H191, and N225 each coordinate Mn(2+). Residues 1-254 (DGEQALQASL…STNINHKEIY (254 aa)) enclose the Pyruvate carboxyltransferase domain. The tract at residues 379–502 (CLKFFSVQSI…VNKNLKNLKK (124 aa)) is regulatory domain.

The protein belongs to the alpha-IPM synthase/homocitrate synthase family. LeuA type 1 subfamily. As to quaternary structure, homodimer. Mn(2+) serves as cofactor.

The protein resides in the cytoplasm. It carries out the reaction 3-methyl-2-oxobutanoate + acetyl-CoA + H2O = (2S)-2-isopropylmalate + CoA + H(+). It functions in the pathway amino-acid biosynthesis; L-leucine biosynthesis; L-leucine from 3-methyl-2-oxobutanoate: step 1/4. Catalyzes the condensation of the acetyl group of acetyl-CoA with 3-methyl-2-oxobutanoate (2-ketoisovalerate) to form 3-carboxy-3-hydroxy-4-methylpentanoate (2-isopropylmalate). The polypeptide is 2-isopropylmalate synthase (Buchnera aphidicola subsp. Uroleucon sonchi).